A 283-amino-acid chain; its full sequence is Zinc-finger homeodomain protein 8 (283 aa).

The segment at 23-68 (YKECMRNHAAAMGGQAFDGCGEYMPASPDSLKCAACGCHRSFHRRA) adopts a ZF-HD dimerization-type; degenerate zinc-finger fold. Disordered stretches follow at residues 131 to 171 (AGRA…TKFT) and 244 to 283 (GLGT…PISV). Over residues 148 to 161 (GSAGGSGSGGGGIF) the composition is skewed to gly residues. The homeobox DNA-binding region spans 163–226 (RKRFRTKFTP…NHKNQLASSP (64 aa)). Residues 244–256 (GLGTGLGTGISGD) are compositionally biased toward gly residues. Positions 257–266 (GDGDDDDTDD) are enriched in acidic residues. Positions 269–283 (PRAAVSSPSPSPISV) are enriched in low complexity.

As to quaternary structure, homo- and heterodimer with other ZFHD proteins.

It localises to the nucleus. Functionally, putative transcription factor. This chain is Zinc-finger homeodomain protein 8 (ZHD8), found in Oryza sativa subsp. japonica (Rice).